An 845-amino-acid chain; its full sequence is MSSAGGEGPEAGPGRAGGRSEPEAPGSALSVDLPGLLGQLARSFALLLPVYALGYLGLSFSWVLLALGLLAWCRRSRGLKASRLCRALALLEDEEQAVRLGVRACDLPAWVHFPDTERAEWLNKTVKHMWPFICQFIEKLFRETIEPAVRGANAHLSTFSFTKVDVGQQPLRVNGVKVYTENVDKRQIILDLQISFVGNCEIDLEIKRYFCRAGVKSIQIHGTMRVILEPLIGDMPLVGALSIFFLRKPLLEINWTGLTNLLDIPGLNGLSDTIILDIISNYLVLPNRITVPLVSEVQIAQLRFPIPKGVLRIHFIEAQDLQGKDTYLKGLVKGKSDPYGIIRVGNQIFQSKVIKENLSPKWNEVYEALVYEHPGQELEIELFDEDPDKDDFLGSLMIDLIEVEKERLLDEWFTLDEVPKGKLHLKLEWLTLMPDAANLDKVLADIRADKDQASDGLSSALLILYLDSARNLPSGKKINSNPNPLVQMSVGHKAQESKIRYKTSEPVWEENFTFFIHNPRRQDLEVEVKDEQHQCSLGSLRIPLSQLLTSDNMTINQRFQLSNSGPNSTLKMKIALRVLHLEKQERPPDYQHSAQVKRPSVSKEGRKMPIKSQMSASPGTGGANTAPSTPVMGVDDKPAMEEKPQPPEASPLGHRDLGRSSSSLLASPSHIAAKEPTPSIASDISLPIATQELRQRLRQLENGTTLGQSPLGQIQLTIRHSSQRNKLIVVVHSCRNLIAFSEDGSDPYVRMYLLPDKRRSGRRKTHVSKKTLNPVFDQSFDFSVSLPEVQRRTLDVAVKNSGGFLSKDKGLLGKVLVVLASEELAKGWTQWYDLTEDGTRPQVIT.

Residues methionine 1–glycine 17 show a composition bias toward gly residues. A disordered region spans residues methionine 1 to glycine 26. Over methionine 1 to serine 27 the chain is Cytoplasmic. The chain crosses the membrane as a helical span at residues alanine 28–leucine 48. The Lumenal portion of the chain corresponds to proline 49–tyrosine 51. The helical transmembrane segment at alanine 52–tryptophan 72 threads the bilayer. Residues cysteine 73–threonine 845 lie on the Cytoplasmic side of the membrane. Residues aspartate 115–valine 294 enclose the SMP-LTD domain. C2 domains are found at residues leucine 293–phenylalanine 413 and valine 442–asparagine 563. The Ca(2+) site is built by lysine 324, aspartate 325, aspartate 337, aspartate 384, glutamate 385, aspartate 386, aspartate 388, aspartate 390, and aspartate 391. The disordered stretch occupies residues glutamine 584–leucine 664. Positions serine 612–serine 628 are enriched in polar residues. Phosphoserine is present on residues serine 615 and serine 617. Residue threonine 629 is modified to Phosphothreonine. A compositionally biased stretch (basic and acidic residues) spans valine 634–glutamine 645. Serine 660, serine 662, serine 663, serine 667, serine 679, serine 682, and serine 685 each carry phosphoserine. Residues proline 710–tyrosine 832 enclose the C2 3 domain. The interval lysine 757–lysine 764 is required for phosphatidylinositol 4,5-bisphosphate-dependent location at the cell membrane.

This sequence belongs to the extended synaptotagmin family. In terms of assembly, homodimer. Interacts with ESYT1 and ESYT3. Interacts with FGFR1 that has been activated by FGF1 binding. Interacts with the AP-2 complex; identified in a complex with the AP-2 complex and FGFR1.

It is found in the cell membrane. It localises to the endoplasmic reticulum membrane. Its function is as follows. Tethers the endoplasmic reticulum to the cell membrane and promotes the formation of appositions between the endoplasmic reticulum and the cell membrane. Binds glycerophospholipids in a barrel-like domain and may play a role in cellular lipid transport. Plays a role in FGF signaling via its role in the rapid internalization of FGFR1 that has been activated by FGF1 binding; this occurs most likely via the AP-2 complex. Promotes the localization of SACM1L at endoplasmic reticulum-plasma membrane contact sites (EPCS). The sequence is that of Extended synaptotagmin-2 (Esyt2) from Mus musculus (Mouse).